Here is a 206-residue protein sequence, read N- to C-terminus: Small ribosomal subunit protein uS4 (206 aa).

The interval 15 to 46 (MGENIWGRPKSPVNKREYGPGQHGQRRKNKLS) is disordered. Positions 94 to 154 (RRLDAIVYRA…EKSRQLALVL (61 aa)) constitute an S4 RNA-binding domain.

Belongs to the universal ribosomal protein uS4 family. Part of the 30S ribosomal subunit. Contacts protein S5. The interaction surface between S4 and S5 is involved in control of translational fidelity.

One of the primary rRNA binding proteins, it binds directly to 16S rRNA where it nucleates assembly of the body of the 30S subunit. Functionally, with S5 and S12 plays an important role in translational accuracy. The chain is Small ribosomal subunit protein uS4 from Cereibacter sphaeroides (strain ATCC 17029 / ATH 2.4.9) (Rhodobacter sphaeroides).